Here is a 335-residue protein sequence, read N- to C-terminus: Glyceraldehyde-3-phosphate dehydrogenase (335 aa).

NAD(+) contacts are provided by residues 12 to 13 (RI), Asp34, Arg78, and Ser120. D-glyceraldehyde 3-phosphate is bound by residues 151–153 (SCT) and Thr182. The active-site Nucleophile is the Cys152. Position 183 (Asn183) interacts with NAD(+). Residues Arg197, 210 to 211 (TG), and Arg233 each bind D-glyceraldehyde 3-phosphate. Asn315 provides a ligand contact to NAD(+).

This sequence belongs to the glyceraldehyde-3-phosphate dehydrogenase family. Homotetramer.

Its subcellular location is the cytoplasm. It carries out the reaction D-glyceraldehyde 3-phosphate + phosphate + NAD(+) = (2R)-3-phospho-glyceroyl phosphate + NADH + H(+). It participates in carbohydrate degradation; glycolysis; pyruvate from D-glyceraldehyde 3-phosphate: step 1/5. Functionally, catalyzes the oxidative phosphorylation of glyceraldehyde 3-phosphate (G3P) to 1,3-bisphosphoglycerate (BPG) using the cofactor NAD. The first reaction step involves the formation of a hemiacetal intermediate between G3P and a cysteine residue, and this hemiacetal intermediate is then oxidized to a thioester, with concomitant reduction of NAD to NADH. The reduced NADH is then exchanged with the second NAD, and the thioester is attacked by a nucleophilic inorganic phosphate to produce BPG. The sequence is that of Glyceraldehyde-3-phosphate dehydrogenase (gap) from Geobacillus stearothermophilus (Bacillus stearothermophilus).